The sequence spans 226 residues: Small ribosomal subunit protein uS5 (226 aa).

A compositionally biased stretch (polar residues) spans 1–18; it reads MAAPQRSRTTGAPSSGGP. Residues 1 to 45 are disordered; it reads MAAPQRSRTTGAPSSGGPSENERGRGGDRRGGDRRGGDRRGGDDR. A compositionally biased stretch (basic and acidic residues) spans 20–45; the sequence is ENERGRGGDRRGGDRRGGDRRGGDDR. An S5 DRBM domain is found at 48–111; the sequence is FVERVVTINR…EEAKKNFFRV (64 aa).

Belongs to the universal ribosomal protein uS5 family. As to quaternary structure, part of the 30S ribosomal subunit. Contacts proteins S4 and S8.

In terms of biological role, with S4 and S12 plays an important role in translational accuracy. Located at the back of the 30S subunit body where it stabilizes the conformation of the head with respect to the body. This chain is Small ribosomal subunit protein uS5, found in Beutenbergia cavernae (strain ATCC BAA-8 / DSM 12333 / CCUG 43141 / JCM 11478 / NBRC 16432 / NCIMB 13614 / HKI 0122).